The chain runs to 279 residues: Single-strand selective monofunctional uracil DNA glycosylase (279 aa).

Residues Met-86, Phe-100, and Asn-165 each coordinate substrate. The segment at 175–189 (SGRNLTPAELPAKQR) is DNA-binding. His-241 contributes to the substrate binding site.

The protein belongs to the uracil-DNA glycosylase (UDG) superfamily. SMUG1 family.

The protein localises to the nucleus. Its function is as follows. Recognizes base lesions in the genome and initiates base excision DNA repair. Acts as a monofunctional DNA glycosylase specific for uracil (U) residues in DNA with a preference for single-stranded DNA substrates. The activity is greater toward mismatches (U/G) compared to matches (U/A). Excises uracil (U), 5-formyluracil (fU) and uracil derivatives bearing an oxidized group at C5 [5-hydroxyuracil (hoU) and 5-hydroxymethyluracil (hmU)] in ssDNA and dsDNA, but not analogous cytosine derivatives (5-hydroxycytosine and 5-formylcytosine), nor other oxidized bases. The activity is damage-specific and salt-dependent. The substrate preference is the following: ssDNA &gt; dsDNA (G pair) = dsDNA (A pair) at low salt concentration, and dsDNA (G pair) &gt; dsDNA (A pair) &gt; ssDNA at high salt concentration. In Mus musculus (Mouse), this protein is Single-strand selective monofunctional uracil DNA glycosylase (Smug1).